The primary structure comprises 507 residues: FAD-linked oxidoreductase OXR1 (507 aa).

An N-terminal signal peptide occupies residues 1 to 21; that stretch reads MTIKFASLILAGLGLGSGALG. 2 N-linked (GlcNAc...) asparagine glycosylation sites follow: N34 and N65. An FAD-binding PCMH-type domain is found at 73–245; sequence YAPPTFKVSV…VSATYKLKPL (173 aa). N-linked (GlcNAc...) asparagine glycosylation is found at N263 and N288.

It belongs to the oxygen-dependent FAD-linked oxidoreductase family. FAD serves as cofactor.

The catalysed reaction is dihydropyriculol + A = pyriculol + AH2. It carries out the reaction dihydropyriculariol + A = pyriculariol + AH2. The protein operates within polyketide biosynthesis. Functionally, FAD-linked oxidoreductase; part of the gene cluster that mediates the biosynthesis of pyriculol and pyriculariol, two heptaketides that induce lesion formation upon application on rice leaves but are dispensable for pathogenicity. The highly reducing polyketide synthase synthesizes the heptaketide backbone of pyriculol and pyriculariol. Pyriculol and pyriculariol contain several hydroxyl moieties and double bonds, so it can be assumed that several reduction steps occur during biosynthesis. These reactions could be executed by PKS19 itself or partly by the tailoring enzymes OXR1, OXR2, RED1, RED2 or RED3, identified within the cluster. The FAD-linked oxidoreductase OXR1 is the only tailoring enzyme for which the function has been determined yet, and is involved in the oxidation of dihydropyriculol and dihydropyriculariol into pyriculol and pyriculariol, respectively. This Pyricularia oryzae (strain 70-15 / ATCC MYA-4617 / FGSC 8958) (Rice blast fungus) protein is FAD-linked oxidoreductase OXR1.